Consider the following 348-residue polypeptide: tRNA pseudouridine synthase D (348 aa).

Aspartate 81 functions as the Nucleophile in the catalytic mechanism. Residues 158 to 304 (GVPNYFGAQR…MRHERRSIEL (147 aa)) enclose the TRUD domain.

It belongs to the pseudouridine synthase TruD family.

The enzyme catalyses uridine(13) in tRNA = pseudouridine(13) in tRNA. Its function is as follows. Responsible for synthesis of pseudouridine from uracil-13 in transfer RNAs. The sequence is that of tRNA pseudouridine synthase D from Aliivibrio salmonicida (strain LFI1238) (Vibrio salmonicida (strain LFI1238)).